Here is a 1076-residue protein sequence, read N- to C-terminus: Nuclear factor of activated T-cells, cytoplasmic 3 (1076 aa).

Thr2 is modified (N-acetylthreonine). Positions 110–115 (PSIQIT) are calcineurin-binding. The interval 206 to 307 (LGSPLTSPGG…PGHSPRGSVT (102 aa)) is disordered. A run of 2 repeats spans residues 208 to 224 (SPLT…PGEE) and 237 to 253 (SPRQ…ITDE). A 3 X SP repeats region spans residues 208–309 (SPLTSPGGSP…HSPRGSVTED (102 aa)). Residues 237-254 (SPRQSPCHSPRSSITDEN) are compositionally biased toward polar residues. A compositionally biased stretch (low complexity) spans 257 to 271 (SPRPASGPSSRPTSP). A Nuclear localization signal motif is present at residues 274–276 (KRR). Residues 293-309 (SPVPSPGHSPRGSVTED) form repeat 3. The residue at position 345 (Ser345) is a Phosphoserine. The segment at 359–390 (CSDDQGSLSPSRETSVDDGLGSQYPLKKDSSG) is disordered. Residues 362–371 (DQGSLSPSRE) are compositionally biased toward polar residues. Ser373 carries the phosphoserine modification. One can recognise an RHD domain in the interval 416-597 (SSLPPLDWPL…IPVECSQRSA (182 aa)). Residues 445–452 (RAHYETEG) mediate DNA binding. Residues 687–689 (KRK) carry the Nuclear localization signal motif. Disordered regions lie at residues 700–744 (PVLM…ALSA) and 863–987 (GHLL…GGLS). Positions 713–722 (LSSVPSLPVP) are enriched in low complexity. Polar residues-rich tracts occupy residues 724–734 (SAQTQRPSSDT) and 888–911 (SAGQ…SHLQ). Low complexity-rich tracts occupy residues 917–939 (PSHP…SSPI) and 946–965 (QLQS…SPSP). Over residues 970–981 (HSGQHSTQAQST) the composition is skewed to polar residues. The Nuclear export signal signature appears at 1032-1041 (TLDDVNEIIG). Positions 1049–1076 (VSQGPEVIRDAPLPGPESPDVMSSNSAQ) are disordered. A Phosphoserine modification is found at Ser1066.

As to quaternary structure, NFATC proteins bind to DNA as monomers. Member of the multicomponent NFATC transcription complex that consists of at least two components, a pre-existing cytoplasmic component NFATC2 and an inducible nuclear component NFATC1. Other members such as NFATC4, or members of the activating protein-1 family, MAF, GATA4 and Cbp/p300 can also bind the complex. Component of a promoter-binding complex composed of STAT3, NFATC3 and NFATC4; complex formation is enhanced by calcineurin. Interacts with TRIM17; this interaction prevents NFATC3 nuclear localization. Interacts with and ubiquitinated by STUB1/CHIP; HSPA1A/HSP70 is required as a co-chaperone. Phosphorylated by NFATC-kinase; dephosphorylated by calcineurin. In terms of processing, ubiquitinated by STUB1/CHIP, leading to proteasomal degradation. Expressed in cardiomyocytes (at protein level).

The protein resides in the cytoplasm. It is found in the nucleus. In terms of biological role, acts as a regulator of transcriptional activation. Binds to the TNFSF11/RANKL promoter region and promotes TNFSF11 transcription. Binding to the TNFSF11 promoter region is increased by high levels of Ca(2+) which induce NFATC3 expression and may lead to regulation of TNFSF11 expression in osteoblasts. Plays a role in promoting mesenteric arterial wall remodeling in response to the intermittent hypoxia-induced increase in EDN1 and ROCK signaling. As a result NFATC3 colocalizes with F-actin filaments, translocates to the nucleus and promotes transcription of the smooth muscle hypertrophy and differentiation marker ACTA2. Promotes lipopolysaccharide-induced apoptosis and hypertrophy in cardiomyocytes. Following JAK/STAT signaling activation and as part of a complex with NFATC4 and STAT3, binds to the alpha-beta E4 promoter region of CRYAB and activates transcription in cardiomyocytes. In conjunction with NFATC4, involved in embryonic heart development via maintenance of cardiomyocyte survival, proliferation and differentiation. Plays a role in the inducible expression of cytokine genes in T-cells, especially in the induction of the IL-2. Required for thymocyte maturation during DN3 to DN4 transition and during positive selection. Positively regulates macrophage-derived polymicrobial clearance, via binding to the promoter region and promoting transcription of NOS2 resulting in subsequent generation of nitric oxide. Involved in Ca(2+)-mediated transcriptional responses upon Ca(2+) influx via ORAI1 CRAC channels. This chain is Nuclear factor of activated T-cells, cytoplasmic 3, found in Rattus norvegicus (Rat).